The sequence spans 371 residues: MSAVEKLPEDFCANPDVAWTFPKVFYTSSQVFEHEKEAIFAKSWICVAHGSELAQPNDYITRKVIGENIVIIRGKDSVLRAFYNVCPHRGHELLSGSGKAKNVITCPYHAWTFKLDGSLALARNCDHVESFDKENSSMVPLKVEEYAGFVFINMDENATCVEDQLPEFAERLNQACSVIKDLKLAARFVTETPANWKVIVDNYLECYHCGPAHPGFADSVQVDKYWHTTHQNWTLQYGFARSSEKSFKLDPSVTDPEFHGFWTWPCTMFNVPPGSNFMTVIYEFPVDAETTLQHYDIYFTNEELTQDQKDLIEWYRNVFRPEDLNLVESVQRGLKSRGYRGQGRIMTDKQRSGISEHGIAYFQHLVAQHHK.

Positions 44-152 constitute a Rieske domain; sequence WICVAHGSEL…VEEYAGFVFI (109 aa). [2Fe-2S] cluster is bound by residues C86, H88, C106, and H109. Fe cation-binding residues include H208, H213, and D323.

The protein belongs to the bacterial ring-hydroxylating dioxygenase alpha subunit family. CntA subfamily. Composed of an oxygenase subunit and a reductase subunit. [2Fe-2S] cluster is required as a cofactor. The cofactor is Fe cation.

The catalysed reaction is (R)-carnitine + NADH + O2 + H(+) = (3R)-3-hydroxy-4-oxobutanoate + trimethylamine + NAD(+) + H2O. The enzyme catalyses (R)-carnitine + NADPH + O2 + H(+) = (3R)-3-hydroxy-4-oxobutanoate + trimethylamine + NADP(+) + H2O. It functions in the pathway amine and polyamine metabolism; carnitine metabolism. Inhibited by EDTA. Functionally, converts carnitine to trimethylamine and malic semialdehyde. Acts on both enantiomers. In Acinetobacter pittii (strain PHEA-2), this protein is Carnitine monooxygenase oxygenase subunit.